Consider the following 611-residue polypeptide: mRNA export factor GLE1 (611 aa).

2 disordered regions span residues 69-94 and 220-243; these read SEDE…SQIC and KIRS…EKIR. Over residues 71-89 the composition is skewed to acidic residues; it reads DEMESDEGEESDDEEEEED.

The protein belongs to the GLE1 family. Part of the nuclear pore complex (NPC). The NPC has an eight-fold symmetrical structure comprising a central transport channel and two rings, the cytoplasmic and nuclear rings, to which eight filaments are attached. The cytoplasmic filaments have loose ends, while the nuclear filaments are joined in a distal ring, forming a nuclear basket. NPCs are highly dynamic in configuration and composition, and can be devided in 3 subcomplexes, the NUP62 subcomplex, the NUP107-160 subcomplex and the NUP93 subcomplex, containing approximately 30 different nucleoporin proteins.

The protein resides in the nucleus envelope. The protein localises to the nucleus. It is found in the nuclear pore complex. Functionally, required for seed viability. This is mRNA export factor GLE1 from Arabidopsis thaliana (Mouse-ear cress).